Reading from the N-terminus, the 508-residue chain is Photosystem II CP47 reaction center protein (508 aa).

A run of 6 helical transmembrane segments spans residues 21–36 (AVHIMHTALVAGWAGS), 101–115 (IVFSGLCFLSATWHW), 140–156 (GIHLFLSGVACFGFGAF), 203–218 (VAAGLLGIIAGLFHLS), 237–252 (VLSSSIAAVFFAAFIV), and 457–472 (TFALLFFFGHIWHGAR).

The protein belongs to the PsbB/PsbC family. PsbB subfamily. As to quaternary structure, PSII is composed of 1 copy each of membrane proteins PsbA, PsbB, PsbC, PsbD, PsbE, PsbF, PsbH, PsbI, PsbJ, PsbK, PsbL, PsbM, PsbT, PsbX, PsbY, PsbZ, Psb30/Ycf12, at least 3 peripheral proteins of the oxygen-evolving complex and a large number of cofactors. It forms dimeric complexes. The cofactor is Binds multiple chlorophylls. PSII binds additional chlorophylls, carotenoids and specific lipids..

It is found in the plastid. The protein localises to the chloroplast thylakoid membrane. Its function is as follows. One of the components of the core complex of photosystem II (PSII). It binds chlorophyll and helps catalyze the primary light-induced photochemical processes of PSII. PSII is a light-driven water:plastoquinone oxidoreductase, using light energy to abstract electrons from H(2)O, generating O(2) and a proton gradient subsequently used for ATP formation. This is Photosystem II CP47 reaction center protein from Welwitschia mirabilis (Tree tumbo).